We begin with the raw amino-acid sequence, 284 residues long: 4-diphosphocytidyl-2-C-methyl-D-erythritol kinase (284 aa).

Residue Lys14 is part of the active site. ATP is bound at residue 98-108 (PMGGGIGGGSS). Residue Asp140 is part of the active site.

Belongs to the GHMP kinase family. IspE subfamily.

It catalyses the reaction 4-CDP-2-C-methyl-D-erythritol + ATP = 4-CDP-2-C-methyl-D-erythritol 2-phosphate + ADP + H(+). It participates in isoprenoid biosynthesis; isopentenyl diphosphate biosynthesis via DXP pathway; isopentenyl diphosphate from 1-deoxy-D-xylulose 5-phosphate: step 3/6. Functionally, catalyzes the phosphorylation of the position 2 hydroxy group of 4-diphosphocytidyl-2C-methyl-D-erythritol. The protein is 4-diphosphocytidyl-2-C-methyl-D-erythritol kinase of Shewanella woodyi (strain ATCC 51908 / MS32).